We begin with the raw amino-acid sequence, 154 residues long: Large ribosomal subunit protein uL23 (154 aa).

Positions 1 to 39 (MAPAKADPSKKSDPKAQAAKVAKAVKSGSTLKKKSQKIR) are disordered. A compositionally biased stretch (low complexity) spans 15-26 (KAQAAKVAKAVK).

The protein belongs to the universal ribosomal protein uL23 family.

Functionally, this protein binds to a specific region on the 26S rRNA. This Nicotiana tabacum (Common tobacco) protein is Large ribosomal subunit protein uL23 (RPL23A).